The following is a 784-amino-acid chain: MKGAGGPDGAPKALLARALYDNHPDCSDELAFCRGDILTILEQDVPESEGWWTCLLHGRQGLAPANRLQILEEAPADGPCPPFFGGLEEAPGRSQENYEVPSPPTPGPVYEQMKSWVEGPPPPTVQIYEFPDPPTCARIVCEKTLSFPKQAIFTIPRAARTSLPALPCQVYDVPAQSRCPPASKEPGKQQLYDIPPSRQKATLGPLSSQANGQNVPLTSATALRRGGCNTLPNPQKSEWIYDTPVSLEKAGVQKASLANSGEELGHRGLPRYMSSFHSPPNSIARSHPPHPQKNGPMQKKLSLPEIPCYSFPPPKCMFPLDESVSYKVPSSFLIPRVEQQNTTPNIYDVPRAMPDVPQAGKELGKAGGPSENSVDHSSSWFCSRAASLSPEPDSISVSSSDSRASVLSSCSSTSTDSSSSSFSEEAAKELPLDLDSAKETVTALQHKVASSVSSLMHFVSRKWRFRDSLEANIDAIRRATDRIEESLREFLDFAHGVRGTAGNLTDSNLQTKIRDQLQTIANAYQILLETKERLESCGWSLEVLATDKVQNSPDDLERFVLVARTVPEDIKRFASIVIANGRLLFKSNCEKEEPVQWTPNAEFKLARRIQLPQKEGESYQRKAPFQKQRASEQPPELIEKNKTNACGQNPGSLIPRPLSQQNPEKRIHLSEHCRLYFGALLKAIGVLNGSLSNRQPPETFITQSKLIIMVGQKLVDTLCKETQERDFRNEILCGSSHLCSLLRNLALATKHAVLEYPSPAALGHLQAEARKLEQHTQQFRGTLE.

Residues 11–73 form the SH3 domain; it reads PKALLARALY…PANRLQILEE (63 aa). A phosphoserine mark is found at Ser-197, Ser-246, Ser-302, Ser-373, and Ser-387. The interval 343–376 is disordered; sequence TPNIYDVPRAMPDVPQAGKELGKAGGPSENSVDH. Positions 466–536 form a coiled coil; sequence RDSLEANIDA…LLETKERLES (71 aa). Residues 614-635 form a disordered region; it reads KEGESYQRKAPFQKQRASEQPP.

It belongs to the CAS family. Interacts (via SH3 domain) with PTK2/FAK1 (via C-terminus). In terms of processing, phosphorylated on tyrosines by SRC.

Its subcellular location is the cytoplasm. It localises to the cytoskeleton. The protein resides in the cell junction. It is found in the focal adhesion. Docking protein that plays a role in tyrosine kinase-based signaling related to cell adhesion and cell spreading. Regulates PTK2/FAK1 activity, focal adhesion integrity, and cell spreading. The polypeptide is Cas scaffolding protein family member 4 (Sus scrofa (Pig)).